The chain runs to 136 residues: Large ribosomal subunit protein uL16 (136 aa).

The protein belongs to the universal ribosomal protein uL16 family. As to quaternary structure, part of the 50S ribosomal subunit.

Its function is as follows. Binds 23S rRNA and is also seen to make contacts with the A and possibly P site tRNAs. The chain is Large ribosomal subunit protein uL16 from Rickettsia rickettsii (strain Iowa).